We begin with the raw amino-acid sequence, 971 residues long: Nuclear factor NF-kappa-B p105 subunit (971 aa).

The RHD domain maps to 40-365 (PYLQILEQPK…EVQRKRQKLM (326 aa)). At cysteine 59 the chain carries S-nitrosocysteine; alternate. Cysteine 59 carries the S-(15-deoxy-Delta12,14-prostaglandin J2-9-yl)cysteine; alternate lipid modification. A Glycyl lysine isopeptide (Lys-Gly) (interchain with G-Cter in SUMO2) cross-link involves residue lysine 323. Residue serine 335 is modified to Phosphoserine; by PKA. The Nuclear localization signal signature appears at 358-363 (QRKRQK). Residues 370 to 392 (DSFGGGSGAGAGGGGMFGSGGGG) form a GRR region. An interaction with CFLAR region spans residues 433 to 971 (INTKFKNGPK…GQEGPIEGKI (539 aa)). Lysine 438 bears the N6-acetyllysine; by EP300 mark. The tract at residues 439–470 (NGPKDCAKSDDEESLTLPEKETEGEGPSLPMA) is disordered. Phosphoserine is present on serine 447. ANK repeat units follow at residues 538–567 (NGDSVLHLAIIHLHAQLVRDLLEVTSGLIS), 577–606 (LYQTPLHLAVITKQEDVVEDLLRVGADLSL), 610–639 (WGNSVLHLAAKEGHDRILSILLKSRKAAPL), 646–675 (EGLNAIHIAVMSNSLPCLLLLVAAGAEVNA), 680–710 (SGRTALHLAVEYDNISLAGCLLLEGDAHVDS), and 714–743 (DGTTPLHIAAGRGSTRLAALLKAAGADPLV). The tract at residues 646–680 (EGLNAIHIAVMSNSLPCLLLLVAAGAEVNAQEQKS) is essential for interaction with HIF1AN. (3S)-3-hydroxyasparagine; by HIF1AN is present on asparagine 674. Serine 755 is subject to Phosphoserine. An ANK 7 repeat occupies 767-797 (PGTTPLDMAANWQVFDILNGKPYEPVFTSDD). One can recognise a Death domain in the interval 801–888 (QGDMKQLTED…EAIEVIQAAF (88 aa)). Serine 896 is modified (phosphoserine). Serine 910 is subject to Phosphoserine; by GSK3-beta; in vitro. A Phosphoserine modification is found at serine 926. 2 positions are modified to phosphoserine; by IKKB: serine 930 and serine 935. A Phosphoserine modification is found at serine 940. Threonine 946 carries the phosphothreonine modification.

Component of the NF-kappa-B p65-p50 complex. Homodimer; component of the NF-kappa-B p50-p50 complex. Component of the NF-kappa-B p105-p50 complex. Component of the NF-kappa-B p50-c-Rel complex. Component of a complex consisting of the NF-kappa-B p50-p50 homodimer and BCL3. Also interacts with MAP3K8. NF-kappa-B p50 subunit interacts with NCOA3 coactivator, which may coactivate NF-kappa-B dependent expression via its histone acetyltransferase activity. Interacts with TSC22D3; this interaction prevents nuclear translocation and DNA-binding. Interacts with SPAG9 and UNC5CL. NFKB1/p105 interacts with CFLAR; the interaction inhibits p105 processing into p50. NFKB1/p105 forms a ternary complex with MAP3K8 and TNIP2. Interacts with GSK3B; the interaction prevents processing of p105 to p50. NFKB1/p50 interacts with NFKBIE. NFKB1/p50 interacts with NFKBIZ. Nuclear factor NF-kappa-B p50 subunit interacts with NFKBID. Directly interacts with MEN1. Interacts with HIF1AN. Interacts with FEM1AA; interaction is direct. In terms of processing, generation of the NF-kappa-B p50 (Nuclear factor NF-kappa-B p50 subunit) transcription factor takes place both cotranslationally and post-translationally via non-mutually exclusive mechanisms. A cotranslational processing allows the production of both p50 and p105 (Nuclear factor NF-kappa-B p105 subunit) from a single NFKB1 mRNA. While translation occurs, the particular unfolded structure after the GRR repeat region acts as a substrate for the proteasome, promoting degradation of the C-terminus. The GRR acts as a proteasomal 'stop signal', protecting the region upstream of the GRR from degradation and promoting generation of p50. It is unclear if limited proteasome degradation during cotranslational processing depends on ubiquitination. NF-kappa-B p50 is also generated post-translationally following ubiquitination by the KPC complex, leading to limited processing by the proteasome downstream of the GRR region, thereby generating p50. Phosphorylation at the C-terminus by IKBKB/IKKB acts as a signal for ubiquitination and promotes either complete degradation or processing to generate the NF-kappa-B p50 (Nuclear factor NF-kappa-B p50 subunit). Phosphorylation at Ser-910 primes p105 for proteolytic processing in response to TNF-alpha stimulation. Phosphorylation at Ser-926, Ser-930 and Ser-935 are required for BTRC/BTRCP-mediated ubiquitination and proteolysis. Phosphorylation at Ser-930 is also required for ubiquitination by the KPC complex and limited processing to generate NF-kappa-B p50 (Nuclear factor NF-kappa-B p50 subunit). Post-translationally, polyubiquitinated at multiple Lys residues in the C-terminus. Polyubiquitinated by the SCF(FBXW11) and SCF(BTRC) complexes following phosphorylation at Ser-926, Ser-930 and Ser-935, leading to its complete degradation. In contrast, polyubiquitination by the KPC complex following phosphorylation at Ser-930 leads to limited proteosomal processing and generation of the active NF-kappa-B p50 (Nuclear factor NF-kappa-B p50 subunit). In terms of processing, S-nitrosylation of Cys-59 affects DNA binding. The covalent modification of cysteine by 15-deoxy-Delta12,14-prostaglandin-J2 is autocatalytic and reversible. It may occur as an alternative to other cysteine modifications, such as S-nitrosylation and S-palmitoylation.

It is found in the cytoplasm. It localises to the nucleus. Its function is as follows. NF-kappa-B is a pleiotropic transcription factor present in almost all cell types and is the endpoint of a series of signal transduction events that are initiated by a vast array of stimuli related to many biological processes such as inflammation, immunity, differentiation, cell growth, tumorigenesis and apoptosis. NF-kappa-B is a homo- or heterodimeric complex formed by the Rel-like domain-containing proteins RELA/p65, RELB, NFKB1/p105, NFKB1/p50, REL and NFKB2/p52 and the heterodimeric p65-p50 complex appears to be most abundant one. The dimers bind at kappa-B sites in the DNA of their target genes and the individual dimers have distinct preferences for different kappa-B sites that they can bind with distinguishable affinity and specificity. Different dimer combinations act as transcriptional activators or repressors, respectively. NF-kappa-B is controlled by various mechanisms of post-translational modification and subcellular compartmentalization as well as by interactions with other cofactors or corepressors. NF-kappa-B complexes are held in the cytoplasm in an inactive state complexed with members of the NF-kappa-B inhibitor (I-kappa-B) family. In a conventional activation pathway, I-kappa-B is phosphorylated by I-kappa-B kinases (IKKs) in response to different activators, subsequently degraded thus liberating the active NF-kappa-B complex which translocates to the nucleus. NF-kappa-B heterodimeric p65-p50 and RelB-p50 complexes are transcriptional activators. The NF-kappa-B p50-p50 homodimer is a transcriptional repressor, but can act as a transcriptional activator when associated with BCL3. NFKB1 appears to have dual functions such as cytoplasmic retention of attached NF-kappa-B proteins by p105 and generation of p50 by a cotranslational processing. The proteasome-mediated process ensures the production of both p50 and p105 and preserves their independent function, although processing of NFKB1/p105 also appears to occur post-translationally. p50 binds to the kappa-B consensus sequence 5'-GGRNNYYCC-3', located in the enhancer region of genes involved in immune response and acute phase reactions. Plays a role in the regulation of apoptosis. In a complex with MAP3K8, NFKB1/p105 represses MAP3K8-induced MAPK signaling; active MAP3K8 is released by proteasome-dependent degradation of NFKB1/p105. P105 is the precursor of the active p50 subunit (Nuclear factor NF-kappa-B p50 subunit) of the nuclear factor NF-kappa-B. Acts as a cytoplasmic retention of attached NF-kappa-B proteins by p105. Functionally, constitutes the active form, which associates with RELA/p65 to form the NF-kappa-B p65-p50 complex to form a transcription factor. Together with RELA/p65, binds to the kappa-B consensus sequence 5'-GGRNNYYCC-3', located in the enhancer region of genes involved in immune response and acute phase reactions. In terms of biological role, isoform 3 (p98) (but not p84 or p105) acts as a transactivator of NF-kappa-B-regulated gene expression. Its function is as follows. Acts as an inhibitor of transactivation of p50 NF-kappa-B subunit, probably by sequestering it in the cytoplasm. This Mus musculus (Mouse) protein is Nuclear factor NF-kappa-B p105 subunit (Nfkb1).